A 440-amino-acid polypeptide reads, in one-letter code: Chromosome partition protein MukF (440 aa).

Residues 208–236 form a leucine-zipper region; it reads LSETSGTLRELQDTLEAAGDKLQANLLRI.

The protein belongs to the MukF family. As to quaternary structure, interacts, and probably forms a ternary complex, with MukE and MukB via its C-terminal region. The complex formation is stimulated by calcium or magnesium. It is required for an interaction between MukE and MukB.

It localises to the cytoplasm. It is found in the nucleoid. In terms of biological role, involved in chromosome condensation, segregation and cell cycle progression. May participate in facilitating chromosome segregation by condensation DNA from both sides of a centrally located replisome during cell division. Not required for mini-F plasmid partitioning. Probably acts via its interaction with MukB and MukE. Overexpression results in anucleate cells. It has a calcium binding activity. The sequence is that of Chromosome partition protein MukF from Salmonella paratyphi B (strain ATCC BAA-1250 / SPB7).